A 467-amino-acid polypeptide reads, in one-letter code: 5-phosphohydroxy-L-lysine phospho-lyase (467 aa).

K278 is subject to N6-(pyridoxal phosphate)lysine.

It belongs to the class-III pyridoxal-phosphate-dependent aminotransferase family. As to quaternary structure, homotetramer. The cofactor is pyridoxal 5'-phosphate.

The protein resides in the mitochondrion. The catalysed reaction is (5R)-5-phosphooxy-L-lysine + H2O = (S)-2-amino-6-oxohexanoate + NH4(+) + phosphate. Catalyzes the pyridoxal-phosphate-dependent breakdown of 5-phosphohydroxy-L-lysine, converting it to ammonia, inorganic phosphate and 2-aminoadipate semialdehyde. The chain is 5-phosphohydroxy-L-lysine phospho-lyase (Phykpl) from Mus musculus (Mouse).